Reading from the N-terminus, the 127-residue chain is V-type proton ATPase subunit F (127 aa).

The protein belongs to the V-ATPase F subunit family. In terms of assembly, V-ATPase is a heteromultimeric enzyme made up of two complexes: the ATP-hydrolytic V1 complex and the proton translocation V0 complex. The V1 complex consists of three catalytic AB heterodimers that form a heterohexamer, three peripheral stalks each consisting of EG heterodimers, one central rotor including subunits D and F, and the regulatory subunits C and H. The proton translocation complex V0 consists of the proton transport subunit a, a ring of proteolipid subunits c9c'', rotary subunit d, subunits e and f, and the accessory subunits VhaAC45 and ATP6AP2.

Its function is as follows. Subunit of the V1 complex of vacuolar(H+)-ATPase (V-ATPase), a multisubunit enzyme composed of a peripheral complex (V1) that hydrolyzes ATP and a membrane integral complex (V0) that translocates protons. V-ATPase is responsible for acidifying and maintaining the pH of intracellular compartments and in some cell types, is targeted to the plasma membrane, where it is responsible for acidifying the extracellular environment. This is V-type proton ATPase subunit F (Vha14) from Anopheles gambiae (African malaria mosquito).